The chain runs to 210 residues: Small ribosomal subunit protein uS5 (210 aa).

Residues 1-23 are compositionally biased toward basic and acidic residues; sequence MARTPSSDRPERGRGGERGDRPN. Residues 1–40 form a disordered region; the sequence is MARTPSSDRPERGRGGERGDRPNRGRGGAEQTPREREESE. One can recognise an S5 DRBM domain in the interval 41–104; that stretch reads FVDKLVHINR…EQAKRNMIKI (64 aa).

This sequence belongs to the universal ribosomal protein uS5 family. As to quaternary structure, part of the 30S ribosomal subunit. Contacts proteins S4 and S8.

Its function is as follows. With S4 and S12 plays an important role in translational accuracy. Located at the back of the 30S subunit body where it stabilizes the conformation of the head with respect to the body. This Paramagnetospirillum magneticum (strain ATCC 700264 / AMB-1) (Magnetospirillum magneticum) protein is Small ribosomal subunit protein uS5.